We begin with the raw amino-acid sequence, 61 residues long: Small ribosomal subunit protein uS14 (61 aa).

Cys-24, Cys-27, Cys-40, and Cys-43 together coordinate Zn(2+).

It belongs to the universal ribosomal protein uS14 family. Zinc-binding uS14 subfamily. As to quaternary structure, part of the 30S ribosomal subunit. Contacts proteins S3 and S10. It depends on Zn(2+) as a cofactor.

In terms of biological role, binds 16S rRNA, required for the assembly of 30S particles and may also be responsible for determining the conformation of the 16S rRNA at the A site. The sequence is that of Small ribosomal subunit protein uS14 from Trichlorobacter lovleyi (strain ATCC BAA-1151 / DSM 17278 / SZ) (Geobacter lovleyi).